A 216-amino-acid chain; its full sequence is NKG2-D type II integral membrane protein (216 aa).

Residues 1–51 (MGWIRGRRPRHNLEMSEFHNYKLGLAKSDFSTRCQKQRCPVIKSKCRENAS) are Cytoplasmic-facing. The helical; Signal-anchor for type II membrane protein transmembrane segment at 52–72 (PLFFCCFIAVAMGIRFIIMVT) threads the bilayer. Topologically, residues 73–216 (IWSAVFLNSL…NTYICMQRTV (144 aa)) are extracellular. Intrachain disulfides connect C96–C105 and C99–C110. The 116-residue stretch at 98–213 (PCPKNWICYK…SIPNTYICMQ (116 aa)) folds into the C-type lectin domain. Residues N115, N131, N163, and N202 are each glycosylated (N-linked (GlcNAc...) asparagine). Cystine bridges form between C127/C211 and C189/C203.

In terms of assembly, homodimer; disulfide-linked. Heterohexamer composed of two subunits of KLRK1 and four subunits of HCST/DAP10. Interacts (via transmembrane domain) with HCST/DAP10 (via transmembrane domain); the interaction is required for KLRK1 NK cell surface and induces NK cell-mediated cytotoxicity. Can form disulfide-bonded heterodimer with CD94. Interacts with CEACAM1; recruits PTPN6 that dephosphorylates VAV1. As to expression, natural killer cells.

It localises to the cell membrane. Its function is as follows. Functions as an activating and costimulatory receptor involved in immunosurveillance upon binding to various cellular stress-inducible ligands displayed at the surface of autologous tumor cells and virus-infected cells. Provides both stimulatory and costimulatory innate immune responses on activated killer (NK) cells, leading to cytotoxic activity. Acts as a costimulatory receptor for T-cell receptor (TCR) in CD8(+) T-cell-mediated adaptive immune responses by amplifying T-cell activation. Stimulates perforin-mediated elimination of ligand-expressing tumor cells. Signaling involves calcium influx, culminating in the expression of TNF-alpha. Participates in NK cell-mediated bone marrow graft rejection. May play a regulatory role in differentiation and survival of NK cells. Binds to ligands belonging to various subfamilies of MHC class I-related glycoproteins. This chain is NKG2-D type II integral membrane protein (KLRK1), found in Macaca fascicularis (Crab-eating macaque).